Consider the following 306-residue polypeptide: MTDSTYDVPRVRTYLQGLQTRIADALGALDGTPLATDVWQRGPEERLRGGGCTRILEGGRVFERAGIGFSDVAGDALPPSASAARPQLAGRGFEALGVSLVLHPRNPYCPTVHMNVRMLIATKPGEAPIFWFGGGMDLTPVYPFEDDARHFHQVCKDALDPFGAELYPRFKTWCDEYFFLKHRNETRGIGGIFFDDFSEPGFERSFEMMQSVGDAFLNAYLPIVERRAALPYGERERDFQAYRRGRYVEFNLVFDRGTLFGLQSGGRTESILMSMPPVANWRYNWQPEPGSPEARLSEFLVPRDWV.

Ser-99 contributes to the substrate binding site. Residues His-103 and His-113 each coordinate a divalent metal cation. His-113 (proton donor) is an active-site residue. 115–117 is a substrate binding site; that stretch reads NVR. 2 residues coordinate a divalent metal cation: His-152 and His-182. An important for dimerization region spans residues 247 to 282; it reads YVEFNLVFDRGTLFGLQSGGRTESILMSMPPVANWR. 265 to 267 is a substrate binding site; the sequence is GGR.

Belongs to the aerobic coproporphyrinogen-III oxidase family. In terms of assembly, homodimer. The cofactor is a divalent metal cation.

It is found in the cytoplasm. The enzyme catalyses coproporphyrinogen III + O2 + 2 H(+) = protoporphyrinogen IX + 2 CO2 + 2 H2O. It functions in the pathway porphyrin-containing compound metabolism; protoporphyrin-IX biosynthesis; protoporphyrinogen-IX from coproporphyrinogen-III (O2 route): step 1/1. In terms of biological role, involved in the heme biosynthesis. Catalyzes the aerobic oxidative decarboxylation of propionate groups of rings A and B of coproporphyrinogen-III to yield the vinyl groups in protoporphyrinogen-IX. This Burkholderia ambifaria (strain MC40-6) protein is Oxygen-dependent coproporphyrinogen-III oxidase.